We begin with the raw amino-acid sequence, 129 residues long: NADPH-dependent 7-cyano-7-deazaguanine reductase (129 aa).

The Thioimide intermediate role is filled by cysteine 34. The active-site Proton donor is aspartate 41. Residues 56-58 and 75-76 each bind substrate; these read VEL and HE.

The protein belongs to the GTP cyclohydrolase I family. QueF type 1 subfamily.

The protein localises to the cytoplasm. The catalysed reaction is 7-aminomethyl-7-carbaguanine + 2 NADP(+) = 7-cyano-7-deazaguanine + 2 NADPH + 3 H(+). It participates in tRNA modification; tRNA-queuosine biosynthesis. In terms of biological role, catalyzes the NADPH-dependent reduction of 7-cyano-7-deazaguanine (preQ0) to 7-aminomethyl-7-deazaguanine (preQ1). This is NADPH-dependent 7-cyano-7-deazaguanine reductase from Nitrosococcus oceani (strain ATCC 19707 / BCRC 17464 / JCM 30415 / NCIMB 11848 / C-107).